The sequence spans 207 residues: Zinc finger protein JAGGED-like (207 aa).

Positions 1–16 (MRADENNTLDLNNLPD) are enriched in low complexity. A disordered region spans residues 1–20 (MRADENNTLDLNNLPDDPSR). The segment at 50–72 (YECRFCSLKFFKSQALGGHMNRH) adopts a C2H2-type zinc-finger fold.

In terms of tissue distribution, expressed in the emerging leaf, stamen and carpel primordia. Not expressed in the apical shoot meristem (SAM).

The protein localises to the nucleus. Functionally, acts with JAG to promote growth and patterning in stamens and carpels. Promotes the growth of the abaxial and adaxial sides of floral organs. Promotes the growth of the pollen-bearing microsporangia in anthers, the carpel walls of the gynoecium and the establishment of the correct number of cell layers in carpel walls. Promotes leaf blade growth and trichome development. This chain is Zinc finger protein JAGGED-like (JGL), found in Arabidopsis thaliana (Mouse-ear cress).